We begin with the raw amino-acid sequence, 192 residues long: GTP cyclohydrolase 1 (192 aa).

Zn(2+) is bound by residues Cys76, His79, and Cys148.

Belongs to the GTP cyclohydrolase I family. As to quaternary structure, toroid-shaped homodecamer, composed of two pentamers of five dimers.

The catalysed reaction is GTP + H2O = 7,8-dihydroneopterin 3'-triphosphate + formate + H(+). Its pathway is cofactor biosynthesis; 7,8-dihydroneopterin triphosphate biosynthesis; 7,8-dihydroneopterin triphosphate from GTP: step 1/1. The protein is GTP cyclohydrolase 1 of Carboxydothermus hydrogenoformans (strain ATCC BAA-161 / DSM 6008 / Z-2901).